Consider the following 264-residue polypeptide: Tryptophan synthase alpha chain (264 aa).

Catalysis depends on proton acceptor residues Glu49 and Asp60.

This sequence belongs to the TrpA family. Tetramer of two alpha and two beta chains.

The catalysed reaction is (1S,2R)-1-C-(indol-3-yl)glycerol 3-phosphate + L-serine = D-glyceraldehyde 3-phosphate + L-tryptophan + H2O. It participates in amino-acid biosynthesis; L-tryptophan biosynthesis; L-tryptophan from chorismate: step 5/5. In terms of biological role, the alpha subunit is responsible for the aldol cleavage of indoleglycerol phosphate to indole and glyceraldehyde 3-phosphate. This is Tryptophan synthase alpha chain from Geotalea daltonii (strain DSM 22248 / JCM 15807 / FRC-32) (Geobacter daltonii).